We begin with the raw amino-acid sequence, 243 residues long: MKDTLFNESLNKRFCFDEKVAHVFDDMLERSIPYYHEMLNLGAYFIAQNLKENIYPKSLPKPLIYDLGCSTGNFFIALNRQIQQEIELVGIDNSMPMLKKAQEKLKDFNNARFECMDFLEVEFKEASAFSLLFVLQFVRPMQREVLLKKIYNSLALNGVLLVGEKIMSEDRILDKQMIELYYLYKQNQGYSHNEIAFKREALENVLVPYSLKENVALLESVGFKHVEALFKWVNFTLLVARKT.

S-adenosyl-L-methionine is bound by residues Y35, 68–70 (GCS), 92–93 (DN), and R199.

Belongs to the class I-like SAM-binding methyltransferase superfamily. Cx-SAM synthase family. Homodimer.

The enzyme catalyses prephenate + S-adenosyl-L-methionine = carboxy-S-adenosyl-L-methionine + 3-phenylpyruvate + H2O. Its function is as follows. Catalyzes the conversion of S-adenosyl-L-methionine (SAM) to carboxy-S-adenosyl-L-methionine (Cx-SAM). This chain is Carboxy-S-adenosyl-L-methionine synthase, found in Helicobacter pylori (strain ATCC 700392 / 26695) (Campylobacter pylori).